A 506-amino-acid polypeptide reads, in one-letter code: Protein MGF 505-9R (506 aa).

3 ANK repeats span residues 54-83, 253-283, and 313-343; these read SIHKALQIAASEGNEDIVKLLILWNGNLKY, QVDTVLFQAVKYNHRKILAHFIHHVPREIVE, and FVKKLLHAVVKHKFMLIIKLLLERPKKKINL.

Belongs to the asfivirus MGF 505 family.

Its function is as follows. Plays a role in virus cell tropism, and may be required for efficient virus replication in macrophages. This African swine fever virus (isolate Tick/Malawi/Lil 20-1/1983) (ASFV) protein is Protein MGF 505-9R.